The chain runs to 490 residues: MELLRPALPSYFLLTLLSIWTAASEARAVSTGMPTISAASFLQNLMHRYGEGDSLTLQQLKALLNHLDVGVGRGNISQPVQGPRNLSTCFSSGELFAAHNLSHQSQIGEREFQEFCPTILQQLDSRACSSENQENEENEQTEEGRPSSVEVWGYGLLCVTVISLCSLLGASVVPFMKKTFYKRLLLYFIALAIGTLYSNALFQLIPEAFGFNPMEDYYVSKSAVVFGGFYLFFFTEKILKMLLKQKNEHHHGHSHYTSETLPSQKDQEEGVTEKLQNGDLDHMIPQHCSGELDGKTPVVDEKVIVGSLSVQDLQASQSACHWLKGVRYSDIGTLAWMITLSDGLHNFIDGLAIGASFTVSVFQGISTSVAILCEEFPHELGDFVILLNAGMSLQQALFFNFLSACCCYVGLGFGILAGSHFSANWIFALAGGMFLYISLADMFPEMNEVSQEDERKGSALIPFVIQNLGLLTGFGIMLVLTMYSGHIQIG.

The N-terminal stretch at 1–28 (MELLRPALPSYFLLTLLSIWTAASEARA) is a signal peptide. The Extracellular segment spans residues 29 to 155 (VSTGMPTISA…PSSVEVWGYG (127 aa)). N-linked (GlcNAc...) asparagine glycosylation is found at asparagine 75, asparagine 85, and asparagine 100. Positions 127–146 (ACSSENQENEENEQTEEGRP) are disordered. Residues 156 to 176 (LLCVTVISLCSLLGASVVPFM) traverse the membrane as a helical segment. The Cytoplasmic portion of the chain corresponds to 177 to 184 (KKTFYKRL). Residues 185–205 (LLYFIALAIGTLYSNALFQLI) form a helical membrane-spanning segment. At 206 to 222 (PEAFGFNPMEDYYVSKS) the chain is on the extracellular side. The helical transmembrane segment at 223-243 (AVVFGGFYLFFFTEKILKMLL) threads the bilayer. Over 244 to 395 (KQKNEHHHGH…LLNAGMSLQQ (152 aa)) the chain is Cytoplasmic. Residues 249–256 (HHHGHSHY) carry the HHHGHXHX-motif motif. An XEXPHE-motif motif is present at residues 374–379 (EEFPHE). Residues 396–416 (ALFFNFLSACCCYVGLGFGIL) traverse the membrane as a helical segment. Topologically, residues 417-422 (AGSHFS) are extracellular. A helical membrane pass occupies residues 423 to 443 (ANWIFALAGGMFLYISLADMF). At 444–459 (PEMNEVSQEDERKGSA) the chain is on the cytoplasmic side. Residues 460 to 480 (LIPFVIQNLGLLTGFGIMLVL) traverse the membrane as a helical segment. Residues 481 to 490 (TMYSGHIQIG) lie on the Extracellular side of the membrane.

It belongs to the ZIP transporter (TC 2.A.5) family. As to quaternary structure, homotrimer. In terms of processing, ubiquitinated. Ubiquitination occurs upon iron depletion. The ubiquitinated form undergoes proteasomal degradation. N-glycosylated. N-glycosylation at Asn-100 is required for iron-regulated extraction of the transporter from membranes and subsequent proteasomal degradation.

The protein resides in the cell membrane. It is found in the apical cell membrane. It localises to the basolateral cell membrane. The protein localises to the early endosome membrane. Its subcellular location is the late endosome membrane. The protein resides in the lysosome membrane. The catalysed reaction is Zn(2+)(out) + 2 hydrogencarbonate(out) = Zn(2+)(in) + 2 hydrogencarbonate(in). The enzyme catalyses Mn(2+)(out) + 2 hydrogencarbonate(out) = Mn(2+)(in) + 2 hydrogencarbonate(in). It carries out the reaction Fe(2+)(out) + 2 hydrogencarbonate(out) = Fe(2+)(in) + 2 hydrogencarbonate(in). It catalyses the reaction Cd(2+)(out) + 2 hydrogencarbonate(out) = Cd(2+)(in) + 2 hydrogencarbonate(in). In terms of biological role, electroneutral transporter of the plasma membrane mediating the cellular uptake of the divalent metal cations zinc, manganese and iron that are important for tissue homeostasis, metabolism, development and immunity. Functions as an energy-dependent symporter, transporting through the membranes an electroneutral complex composed of a divalent metal cation and two bicarbonate anions. Beside these endogenous cellular substrates, can also import cadmium a non-essential metal which is cytotoxic and carcinogenic. This is Metal cation symporter ZIP14 from Bos taurus (Bovine).